A 166-amino-acid chain; its full sequence is Interferon gamma-related (166 aa).

Positions 1–26 (MYCRLNMVYLICALLLIVSLQGTVGA) are cleaved as a signal peptide. Residue asparagine 91 is glycosylated (N-linked (GlcNAc...) asparagine).

Belongs to the type II (or gamma) interferon family. Homodimer. As to expression, strongly expressed in spleen. Also detected at lower levels in gill, kidney, heart, brain and intestine. In immune cell populations, expressed at highest levels in peripheral blood leukocytes and at lower levels in splenocytes, granulocytes, monocytes and macrophages.

It localises to the secreted. Functionally, cytokine which binds to interferon gamma receptor 1 (ifngr1). Has activating effects on primary macrophages. Induces nitric oxide production and phagocytic responses in macrophages. Primes monocytes for production of reactive oxygen intermediates (ROI), although the effect is short-lived. Also has inhibitory effects on monocyte priming by ifng1 (interferon gamma 1) and tnfb (TNF-alpha 2). Stimulates phosphorylation of the JAK/STAT signal transducer stat1, but fails to induce stat1 nuclear localization. Promotes increased expression of a number of genes important for macrophage activity, including the interferon regulatory factors irf2 and irf9. This is Interferon gamma-related from Carassius auratus (Goldfish).